The sequence spans 287 residues: Ribonuclease HII (287 aa).

In terms of domain architecture, RNase H type-2 spans 61 to 287; it reads ALQIGVDEAG…FAPVRKALES (227 aa). Positions 67, 68, and 186 each coordinate a divalent metal cation.

The protein belongs to the RNase HII family. The cofactor is Mn(2+). Mg(2+) is required as a cofactor.

It is found in the cytoplasm. It catalyses the reaction Endonucleolytic cleavage to 5'-phosphomonoester.. Functionally, endonuclease that specifically degrades the RNA of RNA-DNA hybrids. This is Ribonuclease HII from Psychrobacter arcticus (strain DSM 17307 / VKM B-2377 / 273-4).